Here is a 455-residue protein sequence, read N- to C-terminus: Ribulose bisphosphate carboxylase large chain (455 aa).

Residue Lys5 is modified to N6,N6,N6-trimethyllysine. Residues Asn114 and Thr164 each contribute to the substrate site. Catalysis depends on Lys166, which acts as the Proton acceptor. Lys168 is a substrate binding site. The Mg(2+) site is built by Lys192, Asp194, and Glu195. Lys192 is subject to N6-carboxylysine. His285 (proton acceptor) is an active-site residue. The substrate site is built by Arg286, His318, and Ser370.

This sequence belongs to the RuBisCO large chain family. Type I subfamily. In terms of assembly, heterohexadecamer of 8 large chains and 8 small chains; disulfide-linked. The disulfide link is formed within the large subunit homodimers. The cofactor is Mg(2+). The disulfide bond which can form in the large chain dimeric partners within the hexadecamer appears to be associated with oxidative stress and protein turnover.

The protein resides in the plastid. The protein localises to the chloroplast. It carries out the reaction 2 (2R)-3-phosphoglycerate + 2 H(+) = D-ribulose 1,5-bisphosphate + CO2 + H2O. The catalysed reaction is D-ribulose 1,5-bisphosphate + O2 = 2-phosphoglycolate + (2R)-3-phosphoglycerate + 2 H(+). RuBisCO catalyzes two reactions: the carboxylation of D-ribulose 1,5-bisphosphate, the primary event in carbon dioxide fixation, as well as the oxidative fragmentation of the pentose substrate in the photorespiration process. Both reactions occur simultaneously and in competition at the same active site. The protein is Ribulose bisphosphate carboxylase large chain of Lupinus paraguariensis (Lupine).